The primary structure comprises 713 residues: Cytosolic endo-beta-N-acetylglucosaminidase (713 aa).

Positions 1–36 (MIARKRKSNGSETTSGKIPKDDVSSESCLDQPADES) are disordered. The BRCT domain occupies 270 to 362 (FFDACDGFFT…DFRQNQDKFW (93 aa)).

This sequence belongs to the glycosyl hydrolase 85 family.

It localises to the cytoplasm. The protein resides in the cytosol. It catalyses the reaction an N(4)-(oligosaccharide-(1-&gt;3)-[oligosaccharide-(1-&gt;6)]-beta-D-Man-(1-&gt;4)-beta-D-GlcNAc-(1-&gt;4)-alpha-D-GlcNAc)-L-asparaginyl-[protein] + H2O = an oligosaccharide-(1-&gt;3)-[oligosaccharide-(1-&gt;6)]-beta-D-Man-(1-&gt;4)-D-GlcNAc + N(4)-(N-acetyl-beta-D-glucosaminyl)-L-asparaginyl-[protein]. Endoglycosidase that releases N-glycans from glycoproteins by cleaving the beta-1,4-glycosidic bond in the N,N'-diacetylchitobiose core. Involved in the processing of free oligosaccharides in the cytosol. The sequence is that of Cytosolic endo-beta-N-acetylglucosaminidase (engase) from Danio rerio (Zebrafish).